A 188-amino-acid polypeptide reads, in one-letter code: GPI-anchored hemophore ARB_01017 (188 aa).

Positions 1-17 (MKLSVVALAALVSVAAA) are cleaved as a signal peptide. One can recognise a CFEM domain in the interval 18-107 (QGVSELPKCA…SSSSGSASST (90 aa)). Disulfide bonds link Cys26–Cys64, Cys30–Cys59, Cys39–Cys45, and Cys47–Cys80. Asp42 lines the heme pocket. The interval 95–163 (TGGSSSSGSA…ATSTGAPTQT (69 aa)) is disordered. A lipid anchor (GPI-anchor amidated asparagine) is attached at Asn165. Residues 166–188 (AAASVNANGGLLAAIAALVIAVA) constitute a propeptide, removed in mature form.

Belongs to the RBT5 family. Post-translationally, the GPI-anchor is attached to the protein in the endoplasmic reticulum and serves to target the protein to the cell surface. There, the glucosamine-inositol phospholipid moiety is cleaved off and the GPI-modified mannoprotein is covalently attached via its lipidless GPI glycan remnant to the 1,6-beta-glucan of the outer cell wall layer.

It is found in the secreted. It localises to the cell wall. The protein localises to the cell membrane. In terms of biological role, GPI-anchored cell wall protein involved in stabilizing the cell wall. The sequence is that of GPI-anchored hemophore ARB_01017 from Arthroderma benhamiae (strain ATCC MYA-4681 / CBS 112371) (Trichophyton mentagrophytes).